Consider the following 398-residue polypeptide: Transposase for insertion sequence element ISRM5 (398 aa).

It belongs to the transposase mutator family.

Its function is as follows. Required for the transposition of the insertion element. This is Transposase for insertion sequence element ISRM5 from Rhizobium meliloti (strain 1021) (Ensifer meliloti).